A 385-amino-acid polypeptide reads, in one-letter code: DNA replication and repair protein RecF (385 aa).

30–37 (GPNGYGKT) is a binding site for ATP.

Belongs to the RecF family.

It localises to the cytoplasm. Its function is as follows. The RecF protein is involved in DNA metabolism; it is required for DNA replication and normal SOS inducibility. RecF binds preferentially to single-stranded, linear DNA. It also seems to bind ATP. This Mycobacterium tuberculosis (strain ATCC 25177 / H37Ra) protein is DNA replication and repair protein RecF.